Consider the following 651-residue polypeptide: Acid beta-fructofuranosidase (651 aa).

The Cytoplasmic segment spans residues 1 to 23 (MEHHKPLLPTSSHAAPNPRTRKD). Residues 1-103 (MEHHKPLLPT…LFSGEGGASE (103 aa)) constitute a propeptide, removed in mature form. Residues 24–44 (LLLLLCALLFLSSLVAFGRNR) form a helical; Signal-anchor for type II membrane protein membrane-spanning segment. Over 45-651 (ASNVPHDHVS…PFPFNPDQKN (607 aa)) the chain is Lumenal. Residues 48–76 (VPHDHVSSSASNHQQEHQSPTSLPSSKWH) are disordered. Positions 54 to 72 (SSSASNHQQEHQSPTSLPS) are enriched in polar residues. Residues 127–130 (WMND), Gln146, Trp154, and 189–190 (WT) contribute to the substrate site. Asp130 is a catalytic residue. Asn210 is a glycosylation site (N-linked (GlcNAc...) asparagine). 253-254 (RD) serves as a coordination point for substrate. N-linked (GlcNAc...) asparagine glycosylation occurs at Asn275. 2 residues coordinate substrate: Glu308 and Asp343. Cysteines 500 and 548 form a disulfide. The N-linked (GlcNAc...) asparagine glycan is linked to Asn620.

It belongs to the glycosyl hydrolase 32 family. As to quaternary structure, may be present in two forms, a 70 kDa monomer and a heterodimer of the 30 kDa and 38 kDa subunits. The ratio of the levels of the two forms within cells appears to be regulated developmentally.

The protein localises to the membrane. Its subcellular location is the vacuole lumen. It catalyses the reaction Hydrolysis of terminal non-reducing beta-D-fructofuranoside residues in beta-D-fructofuranosides.. It participates in glycan biosynthesis; sucrose metabolism. This is Acid beta-fructofuranosidase from Phaseolus vulgaris (Kidney bean).